Consider the following 331-residue polypeptide: Ornithine carbamoyltransferase (331 aa).

Carbamoyl phosphate contacts are provided by residues 55–58, Q82, R106, and 133–136; these read STRT and HPTQ. L-ornithine contacts are provided by residues N166, D230, and 234–235; that span reads SM. Carbamoyl phosphate is bound by residues 272–273 and R317; that span reads CL.

This sequence belongs to the aspartate/ornithine carbamoyltransferase superfamily. OTCase family.

It localises to the cytoplasm. It carries out the reaction carbamoyl phosphate + L-ornithine = L-citrulline + phosphate + H(+). It participates in amino-acid biosynthesis; L-arginine biosynthesis; L-arginine from L-ornithine and carbamoyl phosphate: step 1/3. Functionally, reversibly catalyzes the transfer of the carbamoyl group from carbamoyl phosphate (CP) to the N(epsilon) atom of ornithine (ORN) to produce L-citrulline. This Neisseria gonorrhoeae (strain ATCC 700825 / FA 1090) protein is Ornithine carbamoyltransferase.